Here is a 524-residue protein sequence, read N- to C-terminus: 2-isopropylmalate synthase (524 aa).

One can recognise a Pyruvate carboxyltransferase domain in the interval 12–274 (VIIFDTTLRD…WNNIETTMLT (263 aa)). The Mn(2+) site is built by aspartate 21, histidine 209, histidine 211, and asparagine 245. The tract at residues 398 to 524 (KLNSLTVIAG…EAVPAVAAAG (127 aa)) is regulatory domain.

It belongs to the alpha-IPM synthase/homocitrate synthase family. LeuA type 1 subfamily. As to quaternary structure, homodimer. It depends on Mn(2+) as a cofactor.

The protein localises to the cytoplasm. The catalysed reaction is 3-methyl-2-oxobutanoate + acetyl-CoA + H2O = (2S)-2-isopropylmalate + CoA + H(+). It participates in amino-acid biosynthesis; L-leucine biosynthesis; L-leucine from 3-methyl-2-oxobutanoate: step 1/4. Functionally, catalyzes the condensation of the acetyl group of acetyl-CoA with 3-methyl-2-oxobutanoate (2-ketoisovalerate) to form 3-carboxy-3-hydroxy-4-methylpentanoate (2-isopropylmalate). This is 2-isopropylmalate synthase from Rhodopseudomonas palustris (strain HaA2).